The following is a 273-amino-acid chain: 3-methyl-2-oxobutanoate hydroxymethyltransferase (273 aa).

Asp-53 and Asp-92 together coordinate Mg(2+). Residues 53–54 (DS), Asp-92, and Lys-122 contribute to the 3-methyl-2-oxobutanoate site. Glu-124 serves as a coordination point for Mg(2+). Glu-191 acts as the Proton acceptor in catalysis.

Belongs to the PanB family. As to quaternary structure, homodecamer; pentamer of dimers. It depends on Mg(2+) as a cofactor.

The protein localises to the cytoplasm. The enzyme catalyses 3-methyl-2-oxobutanoate + (6R)-5,10-methylene-5,6,7,8-tetrahydrofolate + H2O = 2-dehydropantoate + (6S)-5,6,7,8-tetrahydrofolate. It functions in the pathway cofactor biosynthesis; (R)-pantothenate biosynthesis; (R)-pantoate from 3-methyl-2-oxobutanoate: step 1/2. Its function is as follows. Catalyzes the reversible reaction in which hydroxymethyl group from 5,10-methylenetetrahydrofolate is transferred onto alpha-ketoisovalerate to form ketopantoate. The chain is 3-methyl-2-oxobutanoate hydroxymethyltransferase from Phocaeicola vulgatus (strain ATCC 8482 / DSM 1447 / JCM 5826 / CCUG 4940 / NBRC 14291 / NCTC 11154) (Bacteroides vulgatus).